A 377-amino-acid chain; its full sequence is Flagellin C (377 aa).

Coiled coils occupy residues 103 to 129 (SNSKADRVAIQEEITALNDELNRIAET) and 301 to 340 (VDSHRAQLGAFQNRFNHAINNLDNINENVNASKSRIKDTD).

Belongs to the bacterial flagellin family. In terms of assembly, heteromer of multiple flagellin subunits including FlaA, FlaB, FlaC, FlaD and possibly FlaE.

It is found in the secreted. The protein localises to the bacterial flagellum. Flagellin is the subunit protein which polymerizes to form the filaments of bacterial flagella. FlaC is not essential for flagellar synthesis and motility. This chain is Flagellin C (flaC), found in Vibrio anguillarum (Listonella anguillarum).